Here is a 180-residue protein sequence, read N- to C-terminus: Shikimate kinase (180 aa).

14-19 (GAGKTC) is a binding site for ATP. Residue Thr18 coordinates Mg(2+). Substrate-binding residues include Asp36, Arg60, and Gly82. Arg120 contacts ATP. Arg139 contributes to the substrate binding site.

Belongs to the shikimate kinase family. In terms of assembly, monomer. The cofactor is Mg(2+).

It is found in the cytoplasm. The catalysed reaction is shikimate + ATP = 3-phosphoshikimate + ADP + H(+). It participates in metabolic intermediate biosynthesis; chorismate biosynthesis; chorismate from D-erythrose 4-phosphate and phosphoenolpyruvate: step 5/7. Catalyzes the specific phosphorylation of the 3-hydroxyl group of shikimic acid using ATP as a cosubstrate. The sequence is that of Shikimate kinase from Stenotrophomonas maltophilia (strain R551-3).